Here is a 202-residue protein sequence, read N- to C-terminus: TPEQQRYVELFIVVDHGMFMKXXXXXXXXXXXIHQMVNIMKEAYRYLYIDILLTGVEIWSNKDLINVQPAAPQTLDSFGEWRXXXXXXXKSHDNAQLLTSTDFDGPTIGLAYVGSMCDPKRSTAVIQDHSEIDLLVAVTMDHELGHNLGIRHDTGSCSCGGYPCVMSPVISHDISKYFSDCSYIQCWDFIMKENPQCILNKR.

Residues 6–200 (RYVELFIVVD…MKENPQCILN (195 aa)) form the Peptidase M12B domain. Ca(2+) contacts are provided by glutamate 9 and aspartate 93. Disulfide bonds link cysteine 117/cysteine 197, cysteine 157/cysteine 181, and cysteine 159/cysteine 164. Position 142 (histidine 142) interacts with Zn(2+). Glutamate 143 is a catalytic residue. Positions 146 and 152 each coordinate Zn(2+). Ca(2+) is bound by residues cysteine 197 and asparagine 200.

Monomer. It depends on Zn(2+) as a cofactor. As to expression, expressed by the venom gland.

It localises to the secreted. In terms of biological role, non-hemorrhagic metalloproteinase that hydrolyzes the alpha chains of fibrinogen and fibrin but has no activity on beta- and gamma-chains. Cleaves X-Leu bonds. Inhibits platelet aggregation induced by the von Willebrand factor (VWF) (IC(50) is 1.4 uM) and type I collagen (IC(50) is 3.2 uM). Acts by cleaving the vWF and its receptor GPIb, and by cleaving the collagen-binding Alpha-2A domain of the collagen receptor alpha-2/beta-1 integrin (ITGA2/ITGB1). Also degrades the extracellular matrix protein fibronectin (FN1), but has no effect on laminin and type I collagen. The chain is Zinc metalloproteinase barnettlysin-1 from Bothrops barnetti (Barnett's lancehead).